We begin with the raw amino-acid sequence, 235 residues long: Large ribosomal subunit protein uL1 (235 aa).

This sequence belongs to the universal ribosomal protein uL1 family. Part of the 50S ribosomal subunit.

Its function is as follows. Binds directly to 23S rRNA. The L1 stalk is quite mobile in the ribosome, and is involved in E site tRNA release. Functionally, protein L1 is also a translational repressor protein, it controls the translation of the L11 operon by binding to its mRNA. The sequence is that of Large ribosomal subunit protein uL1 from Prochlorococcus marinus (strain NATL1A).